Here is a 385-residue protein sequence, read N- to C-terminus: MKVAYFDCFAGIAGDMTVAALIELGLPLEVLRRELAGLPLSGYALESSKVERHGVAGTSFKVTLTEADQPHRHYSGIAKMIDESGLKPRVKELAQRIFRRLAEAEAAVHGVPLERVHFHEVGAIDSIVDIVGTAIGLDYLGVEAVYASGLPYGRGFVQTAHGRLPVPAPATAKLMEGIPLTFDIGEGERVTPTGAAIIAALAEGFGPPPSLTPLGTGYGAGEKDFPELPNLLRVLLGERAEGKGHQEVLVLETHIDDMNPEIFGFLMERLLEAGALDVAFSPLQMKKNRPATRLTVIADPADLEKLSAIVLSESTAIGLRYYPARRVTAARRCETRETTLGEVAVKVLETGRVTPEYDSCRKIALEKGIPLIEVYRTVERECGQA.

The protein belongs to the LarC family.

This is Putative nickel insertion protein from Geobacter sp. (strain M21).